Reading from the N-terminus, the 473-residue chain is 3-isopropylmalate dehydratase large subunit (473 aa).

Residues cysteine 354, cysteine 414, and cysteine 417 each coordinate [4Fe-4S] cluster.

This sequence belongs to the aconitase/IPM isomerase family. LeuC type 1 subfamily. In terms of assembly, heterodimer of LeuC and LeuD. [4Fe-4S] cluster serves as cofactor.

The catalysed reaction is (2R,3S)-3-isopropylmalate = (2S)-2-isopropylmalate. It participates in amino-acid biosynthesis; L-leucine biosynthesis; L-leucine from 3-methyl-2-oxobutanoate: step 2/4. In terms of biological role, catalyzes the isomerization between 2-isopropylmalate and 3-isopropylmalate, via the formation of 2-isopropylmaleate. This chain is 3-isopropylmalate dehydratase large subunit, found in Mycobacterium marinum (strain ATCC BAA-535 / M).